We begin with the raw amino-acid sequence, 59 residues long: Single-pass membrane and coiled-coil domain-containing protein 4 (59 aa).

Residues M1–M23 are disordered. The span at K9–M23 shows a compositional bias: basic and acidic residues. Positions K9–V30 form a coiled coil. The chain crosses the membrane as a helical span at residues T32–A52.

This sequence belongs to the SMCO4 family.

It localises to the membrane. This Takifugu rubripes (Japanese pufferfish) protein is Single-pass membrane and coiled-coil domain-containing protein 4 (smco4).